A 567-amino-acid chain; its full sequence is Glucose-6-phosphate isomerase, cytosolic A (567 aa).

Residues 156–157, 212–217, Q356, E360, H391, and K516 each bind D-glucose 6-phosphate; these read GS and SKTFTT. E360 (proton donor) is an active-site residue. Residues H391 and K516 contribute to the active site.

Belongs to the GPI family. In terms of assembly, homodimer.

The protein resides in the cytoplasm. It carries out the reaction alpha-D-glucose 6-phosphate = beta-D-fructose 6-phosphate. It participates in carbohydrate degradation; glycolysis; D-glyceraldehyde 3-phosphate and glycerone phosphate from D-glucose: step 2/4. Functionally, catalyzes the conversion of glucose-6-phosphate to fructose-6-phosphate, the second step in glycolysis, and the reverse reaction during gluconeogenesis. The protein is Glucose-6-phosphate isomerase, cytosolic A of Oryza sativa subsp. japonica (Rice).